The chain runs to 123 residues: Large ribosomal subunit protein bL12 (123 aa).

The protein belongs to the bacterial ribosomal protein bL12 family. Homodimer. Part of the ribosomal stalk of the 50S ribosomal subunit. Forms a multimeric L10(L12)X complex, where L10 forms an elongated spine to which 2 to 4 L12 dimers bind in a sequential fashion. Binds GTP-bound translation factors.

In terms of biological role, forms part of the ribosomal stalk which helps the ribosome interact with GTP-bound translation factors. Is thus essential for accurate translation. This Metamycoplasma arthritidis (strain 158L3-1) (Mycoplasma arthritidis) protein is Large ribosomal subunit protein bL12.